The chain runs to 300 residues: Eukaryotic translation initiation factor 3 subunit F (300 aa).

Residues 33-169 (VKVHPVALFS…VQCYVSALLG (137 aa)) enclose the MPN domain.

The protein belongs to the eIF-3 subunit F family. Component of the eukaryotic translation initiation factor 3 (eIF-3) complex.

Its subcellular location is the cytoplasm. In terms of biological role, component of the eukaryotic translation initiation factor 3 (eIF-3) complex, which is involved in protein synthesis of a specialized repertoire of mRNAs and, together with other initiation factors, stimulates binding of mRNA and methionyl-tRNAi to the 40S ribosome. The eIF-3 complex specifically targets and initiates translation of a subset of mRNAs involved in cell proliferation. The polypeptide is Eukaryotic translation initiation factor 3 subunit F (Malassezia globosa (strain ATCC MYA-4612 / CBS 7966) (Dandruff-associated fungus)).